The sequence spans 128 residues: Translation initiation factor 5A (128 aa).

At Lys-35 the chain carries Hypusine.

The protein belongs to the eIF-5A family.

It is found in the cytoplasm. Its function is as follows. Functions by promoting the formation of the first peptide bond. The polypeptide is Translation initiation factor 5A (eif5a) (Methanosarcina mazei (strain ATCC BAA-159 / DSM 3647 / Goe1 / Go1 / JCM 11833 / OCM 88) (Methanosarcina frisia)).